Here is a 510-residue protein sequence, read N- to C-terminus: 2-isopropylmalate synthase (510 aa).

Residues 4 to 266 (IQVFDTTLRD…ETNLKLDETK (263 aa)) form the Pyruvate carboxyltransferase domain. Residues aspartate 13, histidine 201, histidine 203, and asparagine 237 each coordinate Mn(2+). The regulatory domain stretch occupies residues 390-510 (QVETLQLQFV…DTARKDGVVS (121 aa)).

Belongs to the alpha-IPM synthase/homocitrate synthase family. LeuA type 1 subfamily. Homodimer. Mn(2+) is required as a cofactor.

The protein localises to the cytoplasm. It carries out the reaction 3-methyl-2-oxobutanoate + acetyl-CoA + H2O = (2S)-2-isopropylmalate + CoA + H(+). It participates in amino-acid biosynthesis; L-leucine biosynthesis; L-leucine from 3-methyl-2-oxobutanoate: step 1/4. In terms of biological role, catalyzes the condensation of the acetyl group of acetyl-CoA with 3-methyl-2-oxobutanoate (2-ketoisovalerate) to form 3-carboxy-3-hydroxy-4-methylpentanoate (2-isopropylmalate). The polypeptide is 2-isopropylmalate synthase (Staphylococcus carnosus (strain TM300)).